The following is a 52-amino-acid chain: DNA import protein CedA2 (52 aa).

A run of 2 helical transmembrane segments spans residues 1 to 21 (MKSY…VYIY) and 27 to 47 (ILVS…IIFE).

In terms of assembly, forms a complex composed of CedA, CedA1 and CedA2.

Its subcellular location is the cell membrane. In terms of biological role, part of the Ced system, which is involved in DNA import. This is DNA import protein CedA2 from Sulfolobus acidocaldarius (strain ATCC 33909 / DSM 639 / JCM 8929 / NBRC 15157 / NCIMB 11770).